A 63-amino-acid chain; its full sequence is Large ribosomal subunit protein uL29 (63 aa).

This sequence belongs to the universal ribosomal protein uL29 family.

The chain is Large ribosomal subunit protein uL29 from Erwinia tasmaniensis (strain DSM 17950 / CFBP 7177 / CIP 109463 / NCPPB 4357 / Et1/99).